Consider the following 241-residue polypeptide: Probable transcriptional regulator PhnF (241 aa).

The region spanning 11 to 78 (PTRYQEIAAK…QGVGVLVLMR (68 aa)) is the HTH gntR-type domain. Positions 38-57 (EQQLAARFEVNRHTLRRAID) form a DNA-binding region, H-T-H motif.

Belongs to an operon involved in alkylphosphonate uptake and C-P lyase. Exact function not known. By similarity could be a transcriptional regulator. This chain is Probable transcriptional regulator PhnF (phnF), found in Escherichia coli (strain K12).